The following is a 150-amino-acid chain: C-type natriuretic peptide (150 aa).

A signal peptide spans 1–31 (MSISSSSSSSSSSSSCLLLISLMLLAASCQG). Residues 32–127 (RPDLQHRNHK…RKMFRGRTKK (96 aa)) constitute a propeptide that is removed on maturation. Residues 60–73 (GAADGSSGEEAALS) show a composition bias toward low complexity. Positions 60 to 109 (GAADGSSGEEAALSQRAPPSIRALHPRSGRLGLRDDLEAEPPAENKPRRR) are disordered. An intrachain disulfide couples cysteine 134 to cysteine 150.

The protein belongs to the natriuretic peptide family. As to expression, expressed in brain, but not in atrium or ventricle.

The protein resides in the secreted. Hormone which plays a role in endochondral ossification through regulation of cartilaginous growth plate chondrocytes proliferation and differentiation. May also be vasoactive and natriuretic. The chain is C-type natriuretic peptide (cnp) from Acipenser transmontanus (White sturgeon).